Consider the following 308-residue polypeptide: Methionyl-tRNA formyltransferase (308 aa).

Ser109–Pro112 provides a ligand contact to (6S)-5,6,7,8-tetrahydrofolate.

The protein belongs to the Fmt family.

The enzyme catalyses L-methionyl-tRNA(fMet) + (6R)-10-formyltetrahydrofolate = N-formyl-L-methionyl-tRNA(fMet) + (6S)-5,6,7,8-tetrahydrofolate + H(+). Its function is as follows. Attaches a formyl group to the free amino group of methionyl-tRNA(fMet). The formyl group appears to play a dual role in the initiator identity of N-formylmethionyl-tRNA by promoting its recognition by IF2 and preventing the misappropriation of this tRNA by the elongation apparatus. The polypeptide is Methionyl-tRNA formyltransferase (Rhizorhabdus wittichii (strain DSM 6014 / CCUG 31198 / JCM 15750 / NBRC 105917 / EY 4224 / RW1) (Sphingomonas wittichii)).